Here is a 269-residue protein sequence, read N- to C-terminus: Formamidopyrimidine-DNA glycosylase (269 aa).

Pro2 serves as the catalytic Schiff-base intermediate with DNA. Glu3 functions as the Proton donor in the catalytic mechanism. Lys57 (proton donor; for beta-elimination activity) is an active-site residue. The DNA site is built by His90, Arg109, and Lys150. The FPG-type zinc-finger motif lies at 235–269; sequence QVYGRKGEPCRVCGTPIVATKHAQRATFYCRHCQK. Arg259 acts as the Proton donor; for delta-elimination activity in catalysis.

This sequence belongs to the FPG family. Monomer. It depends on Zn(2+) as a cofactor.

The enzyme catalyses Hydrolysis of DNA containing ring-opened 7-methylguanine residues, releasing 2,6-diamino-4-hydroxy-5-(N-methyl)formamidopyrimidine.. The catalysed reaction is 2'-deoxyribonucleotide-(2'-deoxyribose 5'-phosphate)-2'-deoxyribonucleotide-DNA = a 3'-end 2'-deoxyribonucleotide-(2,3-dehydro-2,3-deoxyribose 5'-phosphate)-DNA + a 5'-end 5'-phospho-2'-deoxyribonucleoside-DNA + H(+). Involved in base excision repair of DNA damaged by oxidation or by mutagenic agents. Acts as a DNA glycosylase that recognizes and removes damaged bases. Has a preference for oxidized purines, such as 7,8-dihydro-8-oxoguanine (8-oxoG). Has AP (apurinic/apyrimidinic) lyase activity and introduces nicks in the DNA strand. Cleaves the DNA backbone by beta-delta elimination to generate a single-strand break at the site of the removed base with both 3'- and 5'-phosphates. The polypeptide is Formamidopyrimidine-DNA glycosylase (Salmonella newport (strain SL254)).